A 355-amino-acid chain; its full sequence is Uroporphyrinogen decarboxylase (355 aa).

Residues 27 to 31 (RQAGR), aspartate 77, tyrosine 154, threonine 209, and histidine 328 each bind substrate.

Belongs to the uroporphyrinogen decarboxylase family. As to quaternary structure, homodimer.

The protein resides in the cytoplasm. It catalyses the reaction uroporphyrinogen III + 4 H(+) = coproporphyrinogen III + 4 CO2. It functions in the pathway porphyrin-containing compound metabolism; protoporphyrin-IX biosynthesis; coproporphyrinogen-III from 5-aminolevulinate: step 4/4. Catalyzes the decarboxylation of four acetate groups of uroporphyrinogen-III to yield coproporphyrinogen-III. This is Uroporphyrinogen decarboxylase from Dechloromonas aromatica (strain RCB).